Consider the following 201-residue polypeptide: Sec-independent protein translocase protein TatB (201 aa).

Residues 1–21 (MLDLGWSEILVIAVVLIVVVG) traverse the membrane as a helical segment. Residues 96–201 (LSEAAKAKPA…RRKKTAGTAP (106 aa)) are disordered. Low complexity-rich tracts occupy residues 102–114 (AKPAASSLPAADS) and 159–187 (TSAKQAAPKAKAAAAAKAPTKNTASAPAK). The segment covering 189–201 (PSPRRKKTAGTAP) has biased composition (basic residues).

Belongs to the TatB family. The Tat system comprises two distinct complexes: a TatABC complex, containing multiple copies of TatA, TatB and TatC subunits, and a separate TatA complex, containing only TatA subunits. Substrates initially bind to the TatABC complex, which probably triggers association of the separate TatA complex to form the active translocon.

It localises to the cell inner membrane. Functionally, part of the twin-arginine translocation (Tat) system that transports large folded proteins containing a characteristic twin-arginine motif in their signal peptide across membranes. Together with TatC, TatB is part of a receptor directly interacting with Tat signal peptides. TatB may form an oligomeric binding site that transiently accommodates folded Tat precursor proteins before their translocation. The polypeptide is Sec-independent protein translocase protein TatB (Chelativorans sp. (strain BNC1)).